The sequence spans 1498 residues: Golgin subfamily A member 3 (1498 aa).

Met1 is subject to N-acetylmethionine. Residues 1 to 118 (MDGASAEQDG…GTSAEGSVRK (118 aa)) are disordered. Position 18 is a phosphoserine (Ser18). The span at 27–36 (PLKPPGPLVP) shows a compositional bias: pro residues. Position 57 is a phosphoserine (Ser57). Residues 71 to 81 (PTPPFPDPPSS) are compositionally biased toward pro residues. Positions 121 to 141 (LQSLRLSLPMQETQLCSTDSP) are interaction with GOPC. Disordered stretches follow at residues 166–195 (RVKR…MLNP) and 216–325 (SVPR…SAST). The tract at residues 172-257 (ERSSQPATKT…DYRTEDSNAG (86 aa)) is golgi-targeting domain. Polar residues-rich tracts occupy residues 173–184 (RSSQPATKTRLF) and 269–291 (TKGS…SLSP). The residue at position 272 (Ser272) is a Phosphoserine. Residues 315–324 (SDSSSYSSAS) show a composition bias toward low complexity. 3 positions are modified to phosphoserine: Ser385, Ser389, and Ser465. Residues 394 to 1459 (VSLESSAAET…ALTVHESLSS (1066 aa)) adopt a coiled-coil conformation. A compositionally biased stretch (basic and acidic residues) spans 789-801 (KEELDRGARRLEE). 4 disordered regions span residues 789–809 (KEEL…TSET), 974–993 (QKQK…KEMK), 1376–1400 (RGAA…PIKI), and 1440–1498 (DSLQ…GPGE). Phosphoserine is present on Ser983. Residues 1376–1387 (RGAAKTRKEPKG) are compositionally biased toward basic and acidic residues. Ser1392 is modified (phosphoserine). A compositionally biased stretch (basic and acidic residues) spans 1440 to 1452 (DSLQRQMEEHALT).

As to quaternary structure, homodimer. Interacts with GOLGA7. Isoform 1 interacts with GOPC while isoform 3 does not. Cleaved by caspases in apoptotic cells. As to expression, expressed in all tissues tested. Expressed in liver, testis, lung, heart, salivary gland and kidney.

The protein localises to the cytoplasm. It is found in the golgi apparatus. It localises to the golgi stack membrane. Its function is as follows. Golgi auto-antigen; probably involved in maintaining Golgi structure. The sequence is that of Golgin subfamily A member 3 (GOLGA3) from Homo sapiens (Human).